Here is a 482-residue protein sequence, read N- to C-terminus: uncharacterized protein (482 aa).

One can recognise an AB hydrolase-1 domain in the interval 231 to 459; it reads FEGNAGFYEI…FDACNHYLID (229 aa).

This is an uncharacterized protein from Caenorhabditis elegans.